We begin with the raw amino-acid sequence, 501 residues long: Glycerol kinase (501 aa).

Position 14 (Thr-14) interacts with ADP. Residues Thr-14, Thr-15, and Ser-16 each contribute to the ATP site. Position 14 (Thr-14) interacts with sn-glycerol 3-phosphate. ADP is bound at residue Arg-18. Positions 84, 85, and 136 each coordinate sn-glycerol 3-phosphate. Glycerol is bound by residues Arg-84, Glu-85, and Tyr-136. Position 231 is a phosphohistidine; by HPr (His-231). Asp-245 provides a ligand contact to sn-glycerol 3-phosphate. Glycerol is bound by residues Asp-245 and Gln-246. ADP-binding residues include Thr-267 and Gly-310. ATP-binding residues include Thr-267, Gly-310, Gln-314, and Gly-411. 2 residues coordinate ADP: Gly-411 and Asn-415.

This sequence belongs to the FGGY kinase family. In terms of assembly, homotetramer and homodimer (in equilibrium). In terms of processing, the phosphoenolpyruvate-dependent sugar phosphotransferase system (PTS), including enzyme I, and histidine-containing protein (HPr) are required for the phosphorylation of His-231, which leads to the activation of the enzyme.

The catalysed reaction is glycerol + ATP = sn-glycerol 3-phosphate + ADP + H(+). It participates in polyol metabolism; glycerol degradation via glycerol kinase pathway; sn-glycerol 3-phosphate from glycerol: step 1/1. With respect to regulation, activated by phosphorylation and inhibited by fructose 1,6-bisphosphate (FBP). Key enzyme in the regulation of glycerol uptake and metabolism. Catalyzes the phosphorylation of glycerol to yield sn-glycerol 3-phosphate. The protein is Glycerol kinase of Enterococcus faecalis (strain ATCC 700802 / V583).